A 958-amino-acid polypeptide reads, in one-letter code: N-terminal acetyltransferase B complex subunit NAA25 homolog (958 aa).

3 TPR repeats span residues 7-42 (AVLE…HPNT), 78-111 (ELTL…DPSE), and 320-353 (FFAY…MLEY).

It belongs to the MDM20/NAA25 family. In terms of assembly, component of the N-terminal acetyltransferase B (NatB) complex. Interacts with acer-1. As to expression, expressed in germline and somatic cells.

It is found in the cytoplasm. Its subcellular location is the nucleus. It localises to the chromosome. Non-catalytic subunit of the NatB complex which catalyzes acetylation of the N-terminal methionine residues of proteins beginning with Met-Asp or Met-Glu. Required for chromosome organization and arrangement; specifically for assembly of the central region components of the synaptonemal complex onto chromosomes during meiosis and for DNA double stranded break formation and repair. Acts downstream of xnd-1 to regulate levels of histone acetylation in germ and somatic cell nuclei by controlling acetyl-CoA production through antagonizing the acetyl-CoA hydrolase activity of acer-1. The chain is N-terminal acetyltransferase B complex subunit NAA25 homolog from Caenorhabditis elegans.